The primary structure comprises 302 residues: Protoheme IX farnesyltransferase (302 aa).

The next 9 membrane-spanning stretches (helical) occupy residues 28–48, 50–70, 95–115, 122–142, 150–170, 176–196, 221–241, 243–263, and 282–302; these read VVAL…PGVP, WSVL…AAVV, IAPL…MVVL, LTAW…TLFL, IVIG…AVTG, ALLL…ALAI, LHIL…FVTG, SGGI…QYAV, and ITYL…FVPA.

It belongs to the UbiA prenyltransferase family. Protoheme IX farnesyltransferase subfamily.

The protein localises to the cell inner membrane. The enzyme catalyses heme b + (2E,6E)-farnesyl diphosphate + H2O = Fe(II)-heme o + diphosphate. The protein operates within porphyrin-containing compound metabolism; heme O biosynthesis; heme O from protoheme: step 1/1. Converts heme B (protoheme IX) to heme O by substitution of the vinyl group on carbon 2 of heme B porphyrin ring with a hydroxyethyl farnesyl side group. The protein is Protoheme IX farnesyltransferase of Marinobacter nauticus (strain ATCC 700491 / DSM 11845 / VT8) (Marinobacter aquaeolei).